We begin with the raw amino-acid sequence, 801 residues long: Ribosome biogenesis protein ERB1 (801 aa).

Disordered regions lie at residues 1-135 (MGSK…LEDR) and 358-377 (PEYLPTKEEREEWEKMDPED). Over residues 35 to 90 (SEDEEDYIPSSEVDEDDDDDADESASEDSDDSNDSEDDEVEEDDEALLSDEIPSEG) the composition is skewed to acidic residues. Composition is skewed to basic and acidic residues over residues 91–113 (ESEKDQDLAESKESKQDQDKEPS), 124–135 (PPRKEDEELEDR), and 362–377 (PTKEEREEWEKMDPED). 2 WD repeats span residues 451–490 (GHEGRVRSVAIDPTGVALATGGDDGTVRVWELLTGRQVWS) and 494–534 (NGDE…VTPA). The interval 546-570 (GFGHATNGKQQANLPPGKEPPGKWA) is disordered. WD repeat units lie at residues 586–628 (TVRS…TQIP), 631–669 (KLNGLAQTASFHPLRPLFFVATQRSIRCYDLQKLELVKI), 672–711 (PGAKWISSFDVHPGGDNLVVGSYDKRLLWHDLDLSNRPYK), 715–755 (FHTE…DQLE), and 771–801 (VNKLGVLDIDWHPREPWCVSAGADGTARLWM).

It belongs to the WD repeat BOP1/ERB1 family. In terms of assembly, component of the NOP7 complex, composed of ERB1, NOP7 and YTM1. The complex is held together by ERB1, which interacts with NOP7 via its N-terminal domain and with YTM1 via a high-affinity interaction between the seven-bladed beta-propeller domains of the 2 proteins. The NOP7 complex associates with the 66S pre-ribosome.

Its subcellular location is the nucleus. It is found in the nucleolus. The protein localises to the nucleoplasm. In terms of biological role, component of the NOP7 complex, which is required for maturation of the 25S and 5.8S ribosomal RNAs and formation of the 60S ribosome. In Chaetomium thermophilum (strain DSM 1495 / CBS 144.50 / IMI 039719) (Thermochaetoides thermophila), this protein is Ribosome biogenesis protein ERB1.